A 540-amino-acid polypeptide reads, in one-letter code: Glucose-6-phosphate isomerase (540 aa).

Glutamate 350 functions as the Proton donor in the catalytic mechanism. Residues histidine 381 and lysine 503 contribute to the active site.

Belongs to the GPI family.

It is found in the cytoplasm. The catalysed reaction is alpha-D-glucose 6-phosphate = beta-D-fructose 6-phosphate. It functions in the pathway carbohydrate biosynthesis; gluconeogenesis. The protein operates within carbohydrate degradation; glycolysis; D-glyceraldehyde 3-phosphate and glycerone phosphate from D-glucose: step 2/4. Its function is as follows. Catalyzes the reversible isomerization of glucose-6-phosphate to fructose-6-phosphate. This Burkholderia pseudomallei (strain 1106a) protein is Glucose-6-phosphate isomerase.